The chain runs to 183 residues: Oligoribonuclease (183 aa).

The region spanning L8–L171 is the Exonuclease domain. Residue Y129 is part of the active site.

This sequence belongs to the oligoribonuclease family.

Its subcellular location is the cytoplasm. 3'-to-5' exoribonuclease specific for small oligoribonucleotides. This is Oligoribonuclease from Coxiella burnetii (strain RSA 493 / Nine Mile phase I).